We begin with the raw amino-acid sequence, 395 residues long: Methylthioribose-1-phosphate isomerase (395 aa).

Residue Asp258 is the Proton donor of the active site.

It belongs to the eIF-2B alpha/beta/delta subunits family. MtnA subfamily.

The protein localises to the cytoplasm. It localises to the nucleus. The catalysed reaction is 5-(methylsulfanyl)-alpha-D-ribose 1-phosphate = 5-(methylsulfanyl)-D-ribulose 1-phosphate. Its pathway is amino-acid biosynthesis; L-methionine biosynthesis via salvage pathway; L-methionine from S-methyl-5-thio-alpha-D-ribose 1-phosphate: step 1/6. Functionally, catalyzes the interconversion of methylthioribose-1-phosphate (MTR-1-P) into methylthioribulose-1-phosphate (MTRu-1-P). The protein is Methylthioribose-1-phosphate isomerase of Podospora anserina (strain S / ATCC MYA-4624 / DSM 980 / FGSC 10383) (Pleurage anserina).